Reading from the N-terminus, the 315-residue chain is Cobalamin biosynthesis protein CobD (315 aa).

The next 5 helical transmembrane spans lie at 48-70 (IAGI…LSVQ), 75-94 (LHWI…TIAI), 148-170 (LVDG…AMLY), 208-230 (ITSY…SLYI), and 292-314 (LILL…AAYF).

The protein belongs to the CobD/CbiB family.

The protein resides in the cell membrane. It participates in cofactor biosynthesis; adenosylcobalamin biosynthesis. Converts cobyric acid to cobinamide by the addition of aminopropanol on the F carboxylic group. The sequence is that of Cobalamin biosynthesis protein CobD from Leptospira interrogans serogroup Icterohaemorrhagiae serovar copenhageni (strain Fiocruz L1-130).